The chain runs to 213 residues: MSDMYCGIGKIPKGKERGTPEYCVQSNQVRYYGLKKIDRSLLETAKVKKTSLVKEQTKLNNLIEKGKQMLKEYNNLKLIINDEKSSKSAVNKARKRMEEIVLRKDRFVKDVKKQREIVNDLIEKEKEEEKAAKKAEKAEEKKKQSKNSTSKSGSKSSKSSSGSSKSSSKSSKSSKSSSGSSKSSSKSSKNSKKSSKKSNFRTQFGGKPTGQIW.

Coiled coils occupy residues 54–78 (KEQT…NLKL) and 108–151 (VKDV…STSK). Positions 122-142 (IEKEKEEEKAAKKAEKAEEKK) are enriched in basic and acidic residues. The interval 122 to 213 (IEKEKEEEKA…FGGKPTGQIW (92 aa)) is disordered. Positions 146–188 (KNSTSKSGSKSSKSSSGSSKSSSKSSKSSKSSSGSSKSSSKSS) are enriched in low complexity. Basic residues predominate over residues 189–199 (KNSKKSSKKSN).

The protein belongs to the mimivirus R546 family.

This is an uncharacterized protein from Acanthamoeba polyphaga (Amoeba).